The sequence spans 350 residues: Arginine N-succinyltransferase (350 aa).

Leucine 125 is a binding site for succinyl-CoA. Residue histidine 229 is the Proton donor of the active site.

The protein belongs to the arginine N-succinyltransferase family.

It catalyses the reaction succinyl-CoA + L-arginine = N(2)-succinyl-L-arginine + CoA + H(+). It functions in the pathway amino-acid degradation; L-arginine degradation via AST pathway; L-glutamate and succinate from L-arginine: step 1/5. Functionally, catalyzes the transfer of succinyl-CoA to arginine to produce N(2)-succinylarginine. In Yersinia pseudotuberculosis serotype IB (strain PB1/+), this protein is Arginine N-succinyltransferase.